A 243-amino-acid chain; its full sequence is DNA repair protein RecO (243 aa).

Belongs to the RecO family.

Involved in DNA repair and RecF pathway recombination. This chain is DNA repair protein RecO, found in Azoarcus sp. (strain BH72).